Here is a 188-residue protein sequence, read N- to C-terminus: Threonylcarbamoyl-AMP synthase (188 aa).

Residues 3 to 188 enclose the YrdC-like domain; the sequence is QLQPSAVATT…RSGQILRNGS (186 aa).

The protein belongs to the SUA5 family. TsaC subfamily.

It is found in the cytoplasm. It carries out the reaction L-threonine + hydrogencarbonate + ATP = L-threonylcarbamoyladenylate + diphosphate + H2O. Functionally, required for the formation of a threonylcarbamoyl group on adenosine at position 37 (t(6)A37) in tRNAs that read codons beginning with adenine. Catalyzes the conversion of L-threonine, HCO(3)(-)/CO(2) and ATP to give threonylcarbamoyl-AMP (TC-AMP) as the acyladenylate intermediate, with the release of diphosphate. In Shewanella frigidimarina (strain NCIMB 400), this protein is Threonylcarbamoyl-AMP synthase.